Consider the following 364-residue polypeptide: Leucine dehydrogenase (364 aa).

Residue lysine 80 is part of the active site. Residue glycine 180 to tyrosine 186 participates in NAD(+) binding.

The protein belongs to the Glu/Leu/Phe/Val dehydrogenases family.

It carries out the reaction L-leucine + NAD(+) + H2O = 4-methyl-2-oxopentanoate + NH4(+) + NADH + H(+). It participates in amino-acid degradation; L-leucine degradation; 4-methyl-2-oxopentanoate from L-leucine (dehydrogenase route): step 1/1. Its function is as follows. Catalyzes the reversible deamination of L-leucine to 4-methyl-2-oxopentanoate. This chain is Leucine dehydrogenase (yqiT), found in Bacillus subtilis (strain 168).